The following is a 107-amino-acid chain: Nucleoid-associated protein R00231 (107 aa).

The protein belongs to the YbaB/EbfC family. As to quaternary structure, homodimer.

The protein localises to the cytoplasm. It localises to the nucleoid. Functionally, binds to DNA and alters its conformation. May be involved in regulation of gene expression, nucleoid organization and DNA protection. The sequence is that of Nucleoid-associated protein R00231 from Rhizobium meliloti (strain 1021) (Ensifer meliloti).